The sequence spans 582 residues: 2-succinyl-5-enolpyruvyl-6-hydroxy-3-cyclohexene-1-carboxylate synthase (582 aa).

It belongs to the TPP enzyme family. MenD subfamily. In terms of assembly, homodimer. Requires Mg(2+) as cofactor. It depends on Mn(2+) as a cofactor. Thiamine diphosphate serves as cofactor.

The catalysed reaction is isochorismate + 2-oxoglutarate + H(+) = 5-enolpyruvoyl-6-hydroxy-2-succinyl-cyclohex-3-ene-1-carboxylate + CO2. It functions in the pathway quinol/quinone metabolism; 1,4-dihydroxy-2-naphthoate biosynthesis; 1,4-dihydroxy-2-naphthoate from chorismate: step 2/7. Its pathway is cofactor biosynthesis; phylloquinone biosynthesis. Functionally, catalyzes the thiamine diphosphate-dependent decarboxylation of 2-oxoglutarate and the subsequent addition of the resulting succinic semialdehyde-thiamine pyrophosphate anion to isochorismate to yield 2-succinyl-5-enolpyruvyl-6-hydroxy-3-cyclohexene-1-carboxylate (SEPHCHC). The protein is 2-succinyl-5-enolpyruvyl-6-hydroxy-3-cyclohexene-1-carboxylate synthase of Prochlorococcus marinus (strain MIT 9313).